We begin with the raw amino-acid sequence, 103 residues long: Integration host factor subunit alpha (103 aa).

A disordered region spans residues 50 to 72 (GNFNLRDKGERPGRNPKTGEEIP). Over residues 54–69 (LRDKGERPGRNPKTGE) the composition is skewed to basic and acidic residues.

The protein belongs to the bacterial histone-like protein family. Heterodimer of an alpha and a beta chain.

Its function is as follows. This protein is one of the two subunits of integration host factor, a specific DNA-binding protein that functions in genetic recombination as well as in transcriptional and translational control. This is Integration host factor subunit alpha from Coxiella burnetii (strain CbuK_Q154) (Coxiella burnetii (strain Q154)).